Here is a 101-residue protein sequence, read N- to C-terminus: Small ribosomal subunit protein uS14 (101 aa).

This sequence belongs to the universal ribosomal protein uS14 family. In terms of assembly, part of the 30S ribosomal subunit. Contacts proteins S3 and S10.

Binds 16S rRNA, required for the assembly of 30S particles and may also be responsible for determining the conformation of the 16S rRNA at the A site. This chain is Small ribosomal subunit protein uS14, found in Actinobacillus pleuropneumoniae serotype 3 (strain JL03).